The sequence spans 378 residues: Queuine tRNA-ribosyltransferase (378 aa).

Residue Asp89 is the Proton acceptor of the active site. Substrate contacts are provided by residues 89–93 (DSGGF), Asp143, Gln194, and Gly221. Residues 252–258 (GVGTPAN) are RNA binding. Asp271 serves as the catalytic Nucleophile. 4 residues coordinate Zn(2+): Cys309, Cys311, Cys314, and His340.

The protein belongs to the queuine tRNA-ribosyltransferase family. In terms of assembly, homodimer. Within each dimer, one monomer is responsible for RNA recognition and catalysis, while the other monomer binds to the replacement base PreQ1. Requires Zn(2+) as cofactor.

The enzyme catalyses 7-aminomethyl-7-carbaguanine + guanosine(34) in tRNA = 7-aminomethyl-7-carbaguanosine(34) in tRNA + guanine. The protein operates within tRNA modification; tRNA-queuosine biosynthesis. Catalyzes the base-exchange of a guanine (G) residue with the queuine precursor 7-aminomethyl-7-deazaguanine (PreQ1) at position 34 (anticodon wobble position) in tRNAs with GU(N) anticodons (tRNA-Asp, -Asn, -His and -Tyr). Catalysis occurs through a double-displacement mechanism. The nucleophile active site attacks the C1' of nucleotide 34 to detach the guanine base from the RNA, forming a covalent enzyme-RNA intermediate. The proton acceptor active site deprotonates the incoming PreQ1, allowing a nucleophilic attack on the C1' of the ribose to form the product. After dissociation, two additional enzymatic reactions on the tRNA convert PreQ1 to queuine (Q), resulting in the hypermodified nucleoside queuosine (7-(((4,5-cis-dihydroxy-2-cyclopenten-1-yl)amino)methyl)-7-deazaguanosine). This Lachnospira eligens (strain ATCC 27750 / DSM 3376 / VPI C15-48 / C15-B4) (Eubacterium eligens) protein is Queuine tRNA-ribosyltransferase.